Consider the following 312-residue polypeptide: Non-structural protein 12A (312 aa).

The segment covering 1–23 has biased composition (low complexity); sequence MFKSGSGSLKRSGSISSVKSFSG. 3 disordered regions span residues 1–37, 62–99, and 111–161; these read MFKS…RGSV, FVPE…QNAD, and ESSK…GTGD. The segment covering 63–77 has biased composition (basic and acidic residues); it reads VPEKTKSEGNLKDKS. Residues 78-98 are compositionally biased toward polar residues; that stretch reads SVITGNFGSSGPINAHTNQNA. The segment covering 122–134 has biased composition (basic and acidic residues); it reads DARHTATDSRLSQ.

It belongs to the phytoreovirus non-structural protein Pns12A family.

Its subcellular location is the host cytoplasm. In terms of biological role, constituent of viral factories. Binds to ssRNA and dsRNA. This chain is Non-structural protein 12A, found in Alopecurus aequalis (Barnyard grass).